The sequence spans 194 residues: HTH-type transcriptional regulator BetI (194 aa).

Positions 8–68 constitute an HTH tetR-type domain; it reads EIRRAQLIDA…ATMRHVLRDL (61 aa). The segment at residues 31 to 50 is a DNA-binding region (H-T-H motif); that stretch reads TLASVAQRANISTGIVSHYF.

It participates in amine and polyamine biosynthesis; betaine biosynthesis via choline pathway [regulation]. In terms of biological role, repressor involved in the biosynthesis of the osmoprotectant glycine betaine. It represses transcription of the choline transporter BetT and the genes of BetAB involved in the synthesis of glycine betaine. This is HTH-type transcriptional regulator BetI from Burkholderia cenocepacia (strain ATCC BAA-245 / DSM 16553 / LMG 16656 / NCTC 13227 / J2315 / CF5610) (Burkholderia cepacia (strain J2315)).